The following is a 206-amino-acid chain: Charged multivesicular body protein 6 (206 aa).

Gly-2 carries N-myristoyl glycine lipidation. The stretch at 11 to 103 forms a coiled coil; the sequence is TRVTEQDRAV…AQIEMKVIEG (93 aa). The disordered stretch occupies residues 167-206; it reads EADLELPEVPGEELPEVPEQEPVREKERVKKKPEREMVAV. Over residues 168–185 the composition is skewed to acidic residues; it reads ADLELPEVPGEELPEVPE. A Type-2 MIT-interacting motif motif is present at residues 170–181; the sequence is LELPEVPGEELP. A compositionally biased stretch (basic and acidic residues) spans 187 to 206; that stretch reads EPVREKERVKKKPEREMVAV.

The protein belongs to the SNF7 family. As to quaternary structure, probable core component of the endosomal sorting required for transport complex III (ESCRT-III). ESCRT-III components are thought to multimerize to form a flat lattice on the perimeter membrane of the endosome.

Its subcellular location is the endomembrane system. The protein resides in the late endosome membrane. Functionally, probable core component of the endosomal sorting required for transport complex III (ESCRT-III) which is involved in multivesicular bodies (MVBs) formation and sorting of endosomal cargo proteins into MVBs. MVBs contain intraluminal vesicles (ILVs) that are generated by invagination and scission from the limiting membrane of the endosome and mostly are delivered to lysosomes enabling degradation of membrane proteins, such as stimulated growth factor receptors, lysosomal enzymes and lipids. In the ESCRT-III complex, it probably serves as an acceptor for the ESCRT-II complex on endosomal membranes. The polypeptide is Charged multivesicular body protein 6 (chmp6) (Danio rerio (Zebrafish)).